Here is a 139-residue protein sequence, read N- to C-terminus: Ribulose bisphosphate carboxylase small subunit (139 aa).

The protein belongs to the RuBisCO small chain family. Heterohexadecamer of 8 large and 8 small subunits.

Its subcellular location is the plastid. It is found in the chloroplast. RuBisCO catalyzes two reactions: the carboxylation of D-ribulose 1,5-bisphosphate, the primary event in carbon dioxide fixation, as well as the oxidative fragmentation of the pentose substrate in the photorespiration process. Both reactions occur simultaneously and in competition at the same active site. Although the small subunit is not catalytic it is essential for maximal activity. The sequence is that of Ribulose bisphosphate carboxylase small subunit from Ectocarpus siliculosus (Brown alga).